We begin with the raw amino-acid sequence, 381 residues long: Protein kinase gsk31 (381 aa).

Residues 25–309 (YEPCRVLGSG…AIEVLTHPFF (285 aa)) enclose the Protein kinase domain. ATP-binding positions include 31-39 (LGSGSFGVV) and Lys54. Asp150 (proton acceptor) is an active-site residue. At Ser184 the chain carries Phosphoserine. Residue Tyr185 is modified to Phosphotyrosine.

The protein belongs to the protein kinase superfamily. CMGC Ser/Thr protein kinase family. GSK-3 subfamily.

It catalyses the reaction L-seryl-[protein] + ATP = O-phospho-L-seryl-[protein] + ADP + H(+). The catalysed reaction is L-threonyl-[protein] + ATP = O-phospho-L-threonyl-[protein] + ADP + H(+). The chain is Protein kinase gsk31 (gsk31) from Schizosaccharomyces pombe (strain 972 / ATCC 24843) (Fission yeast).